The primary structure comprises 197 residues: uncharacterized protein (197 aa).

The next 4 membrane-spanning stretches (helical) occupy residues 12-41, 78-100, 120-142, and 162-184; these read LCIF…WVLF, LIQG…TALS, VGVF…FGCV, and IRFA…IFRS.

The protein resides in the cell membrane. This is an uncharacterized protein from Treponema pallidum (strain Nichols).